Consider the following 216-residue polypeptide: Thiopurine S-methyltransferase (216 aa).

S-adenosyl-L-methionine is bound by residues Trp11, Leu46, Glu67, and Arg122.

The protein belongs to the class I-like SAM-binding methyltransferase superfamily. TPMT family.

The protein resides in the cytoplasm. It carries out the reaction S-adenosyl-L-methionine + a thiopurine = S-adenosyl-L-homocysteine + a thiopurine S-methylether.. The chain is Thiopurine S-methyltransferase from Vibrio parahaemolyticus serotype O3:K6 (strain RIMD 2210633).